Consider the following 395-residue polypeptide: Fe(3+) ions import ATP-binding protein FbpC 2 (395 aa).

Residues 1–21 (MHIAQELADETCNSPRGAGHA) are disordered. An ABC transporter domain is found at 23–264 (LRYPSDRRTA…PKTLFVADFI (242 aa)). 66–73 (GPSGCGKT) is an ATP binding site.

This sequence belongs to the ABC transporter superfamily. Fe(3+) ion importer (TC 3.A.1.10) family. As to quaternary structure, the complex is composed of two ATP-binding proteins (FbpC), two transmembrane proteins (FbpB) and a solute-binding protein (FbpA).

The protein resides in the cell inner membrane. It catalyses the reaction Fe(3+)(out) + ATP + H2O = Fe(3+)(in) + ADP + phosphate + H(+). Functionally, part of the ABC transporter complex FbpABC involved in Fe(3+) ions import. Responsible for energy coupling to the transport system. The chain is Fe(3+) ions import ATP-binding protein FbpC 2 from Rhizobium meliloti (strain 1021) (Ensifer meliloti).